A 99-amino-acid chain; its full sequence is Protein translation factor SUI1 homolog (99 aa).

The protein belongs to the SUI1 family.

The sequence is that of Protein translation factor SUI1 homolog from Sulfolobus acidocaldarius (strain ATCC 33909 / DSM 639 / JCM 8929 / NBRC 15157 / NCIMB 11770).